Reading from the N-terminus, the 165-residue chain is Large ribosomal subunit protein uL10 (165 aa).

Lys-37 and Lys-105 each carry N6-acetyllysine.

Belongs to the universal ribosomal protein uL10 family. In terms of assembly, part of the ribosomal stalk of the 50S ribosomal subunit. The N-terminus interacts with L11 and the large rRNA to form the base of the stalk. The C-terminus forms an elongated spine to which L12 dimers bind in a sequential fashion forming a multimeric L10(L12)X complex.

In terms of biological role, protein L10 is also a translational repressor protein. It controls the translation of the rplJL-rpoBC operon by binding to its mRNA. Its function is as follows. Forms part of the ribosomal stalk, playing a central role in the interaction of the ribosome with GTP-bound translation factors. The polypeptide is Large ribosomal subunit protein uL10 (rplJ) (Escherichia coli O6:H1 (strain CFT073 / ATCC 700928 / UPEC)).